The following is a 227-amino-acid chain: ATP synthase F(0) complex subunit a (227 aa).

The next 6 membrane-spanning stretches (helical) occupy residues Pro12–Pro32, Trp69–Leu89, Gln98–Met118, Glu132–Ile152, Phe180–Leu200, and Leu202–Tyr222.

This sequence belongs to the ATPase A chain family. As to quaternary structure, component of the ATP synthase complex composed at least of ATP5F1A/subunit alpha, ATP5F1B/subunit beta, ATP5MC1/subunit c (homooctomer), MT-ATP6/subunit a, MT-ATP8/subunit 8, ATP5ME/subunit e, ATP5MF/subunit f, ATP5MG/subunit g, ATP5MK/subunit k, ATP5MJ/subunit j, ATP5F1C/subunit gamma, ATP5F1D/subunit delta, ATP5F1E/subunit epsilon, ATP5PF/subunit F6, ATP5PB/subunit b, ATP5PD/subunit d, ATP5PO/subunit OSCP. ATP synthase complex consists of a soluble F(1) head domain (subunits alpha(3) and beta(3)) - the catalytic core - and a membrane F(0) domain - the membrane proton channel (subunits c, a, 8, e, f, g, k and j). These two domains are linked by a central stalk (subunits gamma, delta, and epsilon) rotating inside the F1 region and a stationary peripheral stalk (subunits F6, b, d, and OSCP). Interacts with DNAJC30; interaction is direct.

The protein resides in the mitochondrion inner membrane. It carries out the reaction H(+)(in) = H(+)(out). In terms of biological role, subunit a, of the mitochondrial membrane ATP synthase complex (F(1)F(0) ATP synthase or Complex V) that produces ATP from ADP in the presence of a proton gradient across the membrane which is generated by electron transport complexes of the respiratory chain. ATP synthase complex consist of a soluble F(1) head domain - the catalytic core - and a membrane F(1) domain - the membrane proton channel. These two domains are linked by a central stalk rotating inside the F(1) region and a stationary peripheral stalk. During catalysis, ATP synthesis in the catalytic domain of F(1) is coupled via a rotary mechanism of the central stalk subunits to proton translocation. With the subunit c (ATP5MC1), forms the proton-conducting channel in the F(0) domain, that contains two crucial half-channels (inlet and outlet) that facilitate proton movement from the mitochondrial intermembrane space (IMS) into the matrix. Protons are taken up via the inlet half-channel and released through the outlet half-channel, following a Grotthuss mechanism. This Salmo salar (Atlantic salmon) protein is ATP synthase F(0) complex subunit a.